We begin with the raw amino-acid sequence, 545 residues long: Glutamine-dependent NAD(+) synthetase (545 aa).

Positions 5-247 (LRIAMAQFDF…DQWLVVDYMR (243 aa)) constitute a CN hydrolase domain. Catalysis depends on E46, which acts as the Proton acceptor; for glutaminase activity. The active-site For glutaminase activity is K113. Y119 provides a ligand contact to L-glutamine. C151 acts as the Nucleophile; for glutaminase activity in catalysis. Positions 177 and 183 each coordinate L-glutamine. Residues 269–545 (VWRAVVRGVQ…RYPISNAYRG (277 aa)) form a ligase region. ATP is bound at residue 292 to 299 (GLSGGIDS). N375 serves as a coordination point for deamido-NAD(+). Residue T399 participates in ATP binding. Deamido-NAD(+) is bound by residues E404 and K516.

The protein in the C-terminal section; belongs to the NAD synthetase family.

The enzyme catalyses deamido-NAD(+) + L-glutamine + ATP + H2O = L-glutamate + AMP + diphosphate + NAD(+) + H(+). It participates in cofactor biosynthesis; NAD(+) biosynthesis; NAD(+) from deamido-NAD(+) (L-Gln route): step 1/1. Catalyzes the ATP-dependent amidation of deamido-NAD to form NAD. Uses L-glutamine as a nitrogen source. The protein is Glutamine-dependent NAD(+) synthetase of Xylella fastidiosa (strain 9a5c).